Consider the following 496-residue polypeptide: Putative (R)-citramalate synthase CimA (496 aa).

In terms of domain architecture, Pyruvate carboxyltransferase spans 3–253 (VRVLDTTLRD…DTSINIEMLY (251 aa)).

The protein belongs to the alpha-IPM synthase/homocitrate synthase family. As to quaternary structure, homodimer.

The catalysed reaction is pyruvate + acetyl-CoA + H2O = (3R)-citramalate + CoA + H(+). It functions in the pathway amino-acid biosynthesis; L-isoleucine biosynthesis; 2-oxobutanoate from pyruvate: step 1/3. Functionally, catalyzes the condensation of pyruvate and acetyl-coenzyme A to form (R)-citramalate. This is Putative (R)-citramalate synthase CimA from Methanothermobacter thermautotrophicus (strain ATCC 29096 / DSM 1053 / JCM 10044 / NBRC 100330 / Delta H) (Methanobacterium thermoautotrophicum).